Consider the following 694-residue polypeptide: Potassium-transporting ATPase ATP-binding subunit (694 aa).

4 consecutive transmembrane segments (helical) span residues Val-36–Ile-56, Leu-62–Ala-82, Ile-218–Ile-238, and Ile-249–Leu-269. Asp-306 functions as the 4-aspartylphosphate intermediate in the catalytic mechanism. ATP-binding positions include Asp-343, Glu-347, Phe-376–Ser-383, and Lys-394. The Mg(2+) site is built by Asp-530 and Asp-534. The next 3 membrane-spanning stretches (helical) occupy residues Phe-600 to Met-620, Ala-628 to Leu-648, and Leu-666 to Leu-686.

Belongs to the cation transport ATPase (P-type) (TC 3.A.3) family. Type IA subfamily. The system is composed of three essential subunits: KdpA, KdpB and KdpC.

Its subcellular location is the cell inner membrane. It catalyses the reaction K(+)(out) + ATP + H2O = K(+)(in) + ADP + phosphate + H(+). Functionally, part of the high-affinity ATP-driven potassium transport (or Kdp) system, which catalyzes the hydrolysis of ATP coupled with the electrogenic transport of potassium into the cytoplasm. This subunit is responsible for energy coupling to the transport system and for the release of the potassium ions to the cytoplasm. In Agrobacterium fabrum (strain C58 / ATCC 33970) (Agrobacterium tumefaciens (strain C58)), this protein is Potassium-transporting ATPase ATP-binding subunit.